We begin with the raw amino-acid sequence, 543 residues long: Chaperonin GroEL 1 (543 aa).

ATP is bound by residues 30-33, lysine 51, 87-91, glycine 415, and aspartate 496; these read TLGP and DGTTT.

It belongs to the chaperonin (HSP60) family. Forms a cylinder of 14 subunits composed of two heptameric rings stacked back-to-back. Interacts with the co-chaperonin GroES.

It localises to the cytoplasm. It carries out the reaction ATP + H2O + a folded polypeptide = ADP + phosphate + an unfolded polypeptide.. Functionally, together with its co-chaperonin GroES, plays an essential role in assisting protein folding. The GroEL-GroES system forms a nano-cage that allows encapsulation of the non-native substrate proteins and provides a physical environment optimized to promote and accelerate protein folding. The sequence is that of Chaperonin GroEL 1 from Mesorhizobium japonicum (strain LMG 29417 / CECT 9101 / MAFF 303099) (Mesorhizobium loti (strain MAFF 303099)).